The sequence spans 176 residues: Photosystem I assembly protein Ycf4 (176 aa).

The next 2 helical transmembrane spans lie at 22–42 (FVWA…GTAS) and 48–68 (LIAF…GLFI).

This sequence belongs to the Ycf4 family.

It localises to the plastid thylakoid membrane. Seems to be required for the assembly of the photosystem I complex. The sequence is that of Photosystem I assembly protein Ycf4 from Cuscuta gronovii (Common dodder).